A 156-amino-acid polypeptide reads, in one-letter code: Small ribosomal subunit protein uS7 (156 aa).

This sequence belongs to the universal ribosomal protein uS7 family. As to quaternary structure, part of the 30S ribosomal subunit. Contacts proteins S9 and S11.

One of the primary rRNA binding proteins, it binds directly to 16S rRNA where it nucleates assembly of the head domain of the 30S subunit. Is located at the subunit interface close to the decoding center, probably blocks exit of the E-site tRNA. This Thermoanaerobacter sp. (strain X514) protein is Small ribosomal subunit protein uS7.